The sequence spans 384 residues: MAP kinase-activated protein kinase 3 (384 aa).

M1 carries the post-translational modification N-acetylmethionine. Residues 1–33 (MDGETAGEKGSLVPQPGALGAPALGGAPAPGVR) form a disordered region. The span at 14–31 (PQPGALGAPALGGAPAPG) shows a compositional bias: low complexity. Positions 46 to 306 (QLSKQVLGLG…IMQFMNHPWI (261 aa)) constitute a Protein kinase domain. ATP is bound by residues 52 to 60 (LGLGVNGKV) and K75. D168 functions as the Proton acceptor in the catalytic mechanism. At T203 the chain carries Phosphothreonine; by MAPK14. Phosphoserine; by MAPK14 is present on S253. Position 309 is a phosphoserine; by autocatalysis (S309). The tract at residues 309–345 (SMEVPQTPLHTARVLEEDKDHWDDVKEEMTSALATMR) is autoinhibitory helix. T315 bears the Phosphothreonine; by MAPK14 mark. The short motif at 337–346 (MTSALATMRV) is the Nuclear export signal (NES) element. The tract at residues 347–371 (DYDQVKIKDLKTSNNRLLNKRRKKQ) is p38 MAPK-binding site. Short sequence motifs (bipartite nuclear localization signal) lie at residues 352-355 (KIKD) and 366-370 (KRRKK). The tract at residues 359-384 (SNNRLLNKRRKKQGGSSSASPGCNNQ) is disordered. The segment covering 372 to 384 (GGSSSASPGCNNQ) has biased composition (polar residues).

Belongs to the protein kinase superfamily. CAMK Ser/Thr protein kinase family. As to quaternary structure, heterodimer with p38-alpha/MAPK14. The heterodimer with p38-alpha/MAPK14 forms a stable complex: molecules are positioned 'face to face' so that the ATP-binding sites of both kinases are at the heterodimer interface. Interacts with TCF3 and with polycomb proteins, such as PCH2 and BMI1/PCGF4. Phosphorylated and activated by MAPK1/ERK2 and MAPK3/ERK1. Phosphorylated and activated by MAP kinase p38-alpha/MAPK14 at Thr-203, Ser-253 and Thr-315.

It localises to the nucleus. The protein localises to the cytoplasm. The catalysed reaction is L-seryl-[protein] + ATP = O-phospho-L-seryl-[protein] + ADP + H(+). It carries out the reaction L-threonyl-[protein] + ATP = O-phospho-L-threonyl-[protein] + ADP + H(+). Its activity is regulated as follows. Activated following phosphorylation by p38-alpha/MAPK14 following various stresses. Inhibited by ligand 5B (2'-[2-(1,3-benzodioxol-5-yl)pyrimidin-4-yl]-5',6'-dihydrospiro[piperidine-4,7'-pyrrolo[3,2-c]pyridin]- 4'(1'h)-one) and ligand P4O (2-[2-(2-fluorophenyl)pyridin-4-yl]-1,5,6,7-tetrahydro- 4h-pyrrolo[3,2-c]pyridin-4-one), 2 ATP-competitive inhibitors. Functionally, stress-activated serine/threonine-protein kinase involved in cytokines production, endocytosis, cell migration, chromatin remodeling and transcriptional regulation. Following stress, it is phosphorylated and activated by MAP kinase p38-alpha/MAPK14, leading to phosphorylation of substrates. Phosphorylates serine in the peptide sequence, Hyd-X-R-X(2)-S, where Hyd is a large hydrophobic residue. MAPKAPK2 and MAPKAPK3, share the same function and substrate specificity, but MAPKAPK3 kinase activity and level in protein expression are lower compared to MAPKAPK2. Phosphorylates HSP27/HSPB1, KRT18, KRT20, RCSD1, RPS6KA3, TAB3 and TTP/ZFP36. Mediates phosphorylation of HSP27/HSPB1 in response to stress, leading to dissociate HSP27/HSPB1 from large small heat-shock protein (sHsps) oligomers and impair their chaperone activities and ability to protect against oxidative stress effectively. Involved in inflammatory response by regulating tumor necrosis factor (TNF) and IL6 production post-transcriptionally: acts by phosphorylating AU-rich elements (AREs)-binding proteins, such as TTP/ZFP36, leading to regulate the stability and translation of TNF and IL6 mRNAs. Phosphorylation of TTP/ZFP36, a major post-transcriptional regulator of TNF, promotes its binding to 14-3-3 proteins and reduces its ARE mRNA affinity leading to inhibition of dependent degradation of ARE-containing transcript. Involved in toll-like receptor signaling pathway (TLR) in dendritic cells: required for acute TLR-induced macropinocytosis by phosphorylating and activating RPS6KA3. Also acts as a modulator of Polycomb-mediated repression. In Rattus norvegicus (Rat), this protein is MAP kinase-activated protein kinase 3 (Mapkapk3).